The sequence spans 212 residues: ATP-dependent Clp protease proteolytic subunit 2 (212 aa).

The disordered stretch occupies residues 1–20 (MSHNTSIASQGMPAMAGPET). Residue Ser-107 is the Nucleophile of the active site. His-132 is a catalytic residue.

It belongs to the peptidase S14 family. As to quaternary structure, fourteen ClpP subunits assemble into 2 heptameric rings which stack back to back to give a disk-like structure with a central cavity, resembling the structure of eukaryotic proteasomes.

It is found in the cytoplasm. The enzyme catalyses Hydrolysis of proteins to small peptides in the presence of ATP and magnesium. alpha-casein is the usual test substrate. In the absence of ATP, only oligopeptides shorter than five residues are hydrolyzed (such as succinyl-Leu-Tyr-|-NHMec, and Leu-Tyr-Leu-|-Tyr-Trp, in which cleavage of the -Tyr-|-Leu- and -Tyr-|-Trp bonds also occurs).. Cleaves peptides in various proteins in a process that requires ATP hydrolysis. Has a chymotrypsin-like activity. Plays a major role in the degradation of misfolded proteins. This chain is ATP-dependent Clp protease proteolytic subunit 2, found in Cutibacterium acnes (strain DSM 16379 / KPA171202) (Propionibacterium acnes).